Consider the following 501-residue polypeptide: Glutamate--tRNA ligase (501 aa).

A 'HIGH' region motif is present at residues 21–31; that stretch reads PSPTGTPHVGL. Positions 266–270 match the 'KMSKS' region motif; that stretch reads KLSKR. K269 is an ATP binding site.

Belongs to the class-I aminoacyl-tRNA synthetase family. Glutamate--tRNA ligase type 1 subfamily. As to quaternary structure, monomer.

The protein localises to the cytoplasm. It carries out the reaction tRNA(Glu) + L-glutamate + ATP = L-glutamyl-tRNA(Glu) + AMP + diphosphate. Its function is as follows. Catalyzes the attachment of glutamate to tRNA(Glu) in a two-step reaction: glutamate is first activated by ATP to form Glu-AMP and then transferred to the acceptor end of tRNA(Glu). The sequence is that of Glutamate--tRNA ligase from Kineococcus radiotolerans (strain ATCC BAA-149 / DSM 14245 / SRS30216).